The sequence spans 313 residues: Jacalin-related lectin 8 (313 aa).

Residues 1 to 23 (MFIIYLFIFLSSAIIDSNGVAMA) form the signal peptide. 2 consecutive Jacalin-type lectin domains span residues 24–163 (QKIE…YVKT) and 165–309 (PTKS…YFSP).

This sequence belongs to the jacalin lectin family.

This is Jacalin-related lectin 8 (JAL8) from Arabidopsis thaliana (Mouse-ear cress).